The primary structure comprises 503 residues: Anaerobic nitric oxide reductase flavorubredoxin (503 aa).

Positions 30–210 (LQGSSYNSYL…PFSRLVTAKI (181 aa)) are zinc metallo-hydrolase. Positions 79, 81, 83, 147, 166, and 227 each coordinate Fe cation. The region spanning 254-393 (ITLFYDTMSN…ICREHGREIA (140 aa)) is the Flavodoxin-like domain. FMN-binding positions include 260-264 (TMSNN) and 342-369 (AFGS…ETTL). The Rubredoxin-like domain occupies 451 to 502 (NGCMQCSVCQWIYDPALGEPMQDVTPGTMWSDVPDSFLCPECGLGKDVFNPI). Residues cysteine 456, cysteine 459, cysteine 489, and cysteine 492 each contribute to the Fe cation site.

This sequence in the N-terminal section; belongs to the zinc metallo-hydrolase group 3 family. Homotetramer. It depends on Fe cation as a cofactor. FMN serves as cofactor.

It localises to the cytoplasm. The protein operates within nitrogen metabolism; nitric oxide reduction. Its function is as follows. Anaerobic nitric oxide reductase; uses NADH to detoxify nitric oxide (NO), protecting several 4Fe-4S NO-sensitive enzymes. Has at least 2 reductase partners, only one of which (NorW, flavorubredoxin reductase) has been identified. NO probably binds to the di-iron center; electrons enter from the NorW at rubredoxin and are transferred sequentially to the FMN center and the di-iron center. Also able to function as an aerobic oxygen reductase. The chain is Anaerobic nitric oxide reductase flavorubredoxin from Pectobacterium carotovorum subsp. carotovorum (strain PC1).